The primary structure comprises 236 residues: 2-C-methyl-D-erythritol 4-phosphate cytidylyltransferase (236 aa).

Belongs to the IspD/TarI cytidylyltransferase family. IspD subfamily. As to quaternary structure, homodimer.

The enzyme catalyses 2-C-methyl-D-erythritol 4-phosphate + CTP + H(+) = 4-CDP-2-C-methyl-D-erythritol + diphosphate. Its pathway is isoprenoid biosynthesis; isopentenyl diphosphate biosynthesis via DXP pathway; isopentenyl diphosphate from 1-deoxy-D-xylulose 5-phosphate: step 2/6. Its function is as follows. Catalyzes the formation of 4-diphosphocytidyl-2-C-methyl-D-erythritol from CTP and 2-C-methyl-D-erythritol 4-phosphate (MEP). The polypeptide is 2-C-methyl-D-erythritol 4-phosphate cytidylyltransferase (Salmonella typhimurium (strain LT2 / SGSC1412 / ATCC 700720)).